A 394-amino-acid polypeptide reads, in one-letter code: NAD(P)H-quinone oxidoreductase subunit H (394 aa).

Belongs to the complex I 49 kDa subunit family. NDH-1 can be composed of about 15 different subunits; different subcomplexes with different compositions have been identified which probably have different functions.

It localises to the cellular thylakoid membrane. It carries out the reaction a plastoquinone + NADH + (n+1) H(+)(in) = a plastoquinol + NAD(+) + n H(+)(out). The enzyme catalyses a plastoquinone + NADPH + (n+1) H(+)(in) = a plastoquinol + NADP(+) + n H(+)(out). NDH-1 shuttles electrons from an unknown electron donor, via FMN and iron-sulfur (Fe-S) centers, to quinones in the respiratory and/or the photosynthetic chain. The immediate electron acceptor for the enzyme in this species is believed to be plastoquinone. Couples the redox reaction to proton translocation, and thus conserves the redox energy in a proton gradient. Cyanobacterial NDH-1 also plays a role in inorganic carbon-concentration. This chain is NAD(P)H-quinone oxidoreductase subunit H, found in Nostoc sp. (strain PCC 7120 / SAG 25.82 / UTEX 2576).